The following is a 210-amino-acid chain: Large ribosomal subunit protein bL25 (210 aa).

The interval 186-210 (ISSASTEKEAESNQESTSTTPSSES) is disordered. The span at 198–210 (NQESTSTTPSSES) shows a compositional bias: low complexity.

It belongs to the bacterial ribosomal protein bL25 family. CTC subfamily. In terms of assembly, part of the 50S ribosomal subunit; part of the 5S rRNA/L5/L18/L25 subcomplex. Contacts the 5S rRNA. Binds to the 5S rRNA independently of L5 and L18.

Functionally, this is one of the proteins that binds to the 5S RNA in the ribosome where it forms part of the central protuberance. This chain is Large ribosomal subunit protein bL25, found in Ehrlichia chaffeensis (strain ATCC CRL-10679 / Arkansas).